Here is a 571-residue protein sequence, read N- to C-terminus: Plastidial pyruvate kinase 3, chloroplastic (571 aa).

Residues 1-55 constitute a chloroplast transit peptide; the sequence is MAAYGQISSGMTVDPQVLSSSRNIGVSLSPLRRTLIGAGVRSTSISLRQCSLSVR. Substrate is bound at residue arginine 129. The K(+) site is built by asparagine 131, serine 133, aspartate 164, and threonine 165. 131–134 is a binding site for ATP; the sequence is NMSH. ATP is bound at residue arginine 171. Lysine 314 contributes to the substrate binding site. Glutamate 316 is a binding site for Mg(2+). Residues glycine 339, aspartate 340, and threonine 372 each coordinate substrate. Residue aspartate 340 coordinates Mg(2+).

The protein belongs to the pyruvate kinase family. Oligomer of alpha and beta subunits. It depends on Mg(2+) as a cofactor. K(+) is required as a cofactor. In terms of tissue distribution, expressed at low levels in roots, leaves, inflorescences, siliques, pollen, seeds and flowers.

The protein localises to the plastid. Its subcellular location is the chloroplast stroma. The catalysed reaction is pyruvate + ATP = phosphoenolpyruvate + ADP + H(+). It participates in carbohydrate degradation; glycolysis; pyruvate from D-glyceraldehyde 3-phosphate: step 5/5. In terms of biological role, required for plastidial pyruvate kinase activity. In Arabidopsis thaliana (Mouse-ear cress), this protein is Plastidial pyruvate kinase 3, chloroplastic (PKP3).